The sequence spans 231 residues: Putative aminodeoxychorismate lyase (231 aa).

This sequence belongs to the class-IV pyridoxal-phosphate-dependent aminotransferase family. Pyridoxal 5'-phosphate serves as cofactor.

It is found in the cytoplasm. The protein resides in the nucleus. The catalysed reaction is 4-amino-4-deoxychorismate = 4-aminobenzoate + pyruvate + H(+). It participates in cofactor biosynthesis; tetrahydrofolate biosynthesis; 4-aminobenzoate from chorismate: step 2/2. In terms of biological role, converts 4-amino-4-deoxychorismate into 4-aminobenzoate (PABA) and pyruvate. The polypeptide is Putative aminodeoxychorismate lyase (Schizosaccharomyces pombe (strain 972 / ATCC 24843) (Fission yeast)).